The chain runs to 1788 residues: Protein TIC 214 (1788 aa).

The next 6 helical transmembrane spans lie at 25–45, 70–90, 95–115, 132–152, 180–200, and 223–243; these read IINSVVVVGLYYGFFTTFSIG, IGFIAGQLMMFISIYYAPLHL, PHTITALVLPYLLFHFFWNNH, LNIQCIFLNSLIFQLFNHFIL, VGWLVGHIFFMKWVELVLFWI, and IFSILLFIVCIYYLGRMPSPL. Disordered stretches follow at residues 248–297 and 1482–1526; these read LKKT…EEKE and DLEN…DFDR. Composition is skewed to basic and acidic residues over residues 253-277 and 1513-1526; these read KREERGKNKEETDVEIEKISEEKGT and PLKKQTDGKEDFDR.

It belongs to the TIC214 family. As to quaternary structure, part of the Tic complex.

Its subcellular location is the plastid. The protein resides in the chloroplast inner membrane. Functionally, involved in protein precursor import into chloroplasts. May be part of an intermediate translocation complex acting as a protein-conducting channel at the inner envelope. This chain is Protein TIC 214, found in Ranunculus macranthus (Large buttercup).